The chain runs to 135 residues: Protein NrdI (135 aa).

The protein belongs to the NrdI family.

Its function is as follows. Probably involved in ribonucleotide reductase function. The protein is Protein NrdI of Pectobacterium atrosepticum (strain SCRI 1043 / ATCC BAA-672) (Erwinia carotovora subsp. atroseptica).